A 634-amino-acid polypeptide reads, in one-letter code: Putative ABC transporter ATP-binding protein MG015 homolog (634 aa).

6 helical membrane-spanning segments follow: residues 54–74 (VLYV…NSIL), 111–131 (LTIV…FNVA), 189–209 (VGGQ…ILFV), 213–233 (VIAL…FLFL), 296–316 (VFIY…SISI), and 325–345 (IPSF…IAAL). The ABC transmembrane type-1 domain occupies 54-364 (VLYVMVCAIF…IFSLWNLIQL (311 aa)). One can recognise an ABC transporter domain in the interval 397–631 (IRFEKVVFGY…NGFYARLKRS (235 aa)). An ATP-binding site is contributed by 430–437 (GPTGAGKS).

It belongs to the ABC transporter superfamily.

The protein resides in the cell membrane. This Mycoplasma pneumoniae (strain ATCC 29342 / M129 / Subtype 1) (Mycoplasmoides pneumoniae) protein is Putative ABC transporter ATP-binding protein MG015 homolog.